Consider the following 293-residue polypeptide: Protease HtpX homolog (293 aa).

The next 2 membrane-spanning stretches (helical) occupy residues 4 to 24 and 39 to 59; these read IFLF…VLSL and PMLL…SLLI. Residue His144 participates in Zn(2+) binding. Glu145 is a catalytic residue. Position 148 (His148) interacts with Zn(2+). 2 helical membrane passes run 159–179 and 200–220; these read LVQG…GYFV and ITVL…VAWF. Glu225 is a binding site for Zn(2+).

It belongs to the peptidase M48B family. Zn(2+) serves as cofactor.

The protein resides in the cell inner membrane. This is Protease HtpX homolog from Herminiimonas arsenicoxydans.